We begin with the raw amino-acid sequence, 134 residues long: Small ribosomal subunit protein uS9 (134 aa).

The disordered stretch occupies residues 109–134 (DARRTEPHKPSKSSKGPRAKRQKSYR). The span at 118–134 (PSKSSKGPRAKRQKSYR) shows a compositional bias: basic residues.

This sequence belongs to the universal ribosomal protein uS9 family.

The sequence is that of Small ribosomal subunit protein uS9 from Methanococcus maripaludis (strain DSM 14266 / JCM 13030 / NBRC 101832 / S2 / LL).